A 444-amino-acid chain; its full sequence is Spermidine/putrescine import ATP-binding protein PotA (444 aa).

Residues 11–332 enclose the ABC transporter domain; that stretch reads ISLVDVDKEF…PVNKWVANFI (322 aa). Residue 43 to 50 participates in ATP binding; sequence GPSGSGKT. The insert stretch occupies residues 111-201; that stretch reads RIKKKAEEIP…ESFKKKYLTR (91 aa).

The protein belongs to the ABC transporter superfamily. Spermidine/putrescine importer (TC 3.A.1.11.1) family. As to quaternary structure, the complex is composed of two ATP-binding proteins (PotA), two transmembrane proteins (PotB and PotC) and a solute-binding protein (PotD).

It is found in the cell membrane. The enzyme catalyses ATP + H2O + polyamine-[polyamine-binding protein]Side 1 = ADP + phosphate + polyamineSide 2 + [polyamine-binding protein]Side 1.. Functionally, part of the ABC transporter complex PotABCD involved in spermidine/putrescine import. Responsible for energy coupling to the transport system. In Mesomycoplasma hyopneumoniae (strain J / ATCC 25934 / NCTC 10110) (Mycoplasma hyopneumoniae), this protein is Spermidine/putrescine import ATP-binding protein PotA.